We begin with the raw amino-acid sequence, 265 residues long: Glutamate racemase (265 aa).

Substrate is bound by residues 9–10 (DS) and 41–42 (YG). Residue cysteine 72 is the Proton donor/acceptor of the active site. 73–74 (NT) provides a ligand contact to substrate. The active-site Proton donor/acceptor is the cysteine 183. 184-185 (TH) provides a ligand contact to substrate.

This sequence belongs to the aspartate/glutamate racemases family.

The enzyme catalyses L-glutamate = D-glutamate. The protein operates within cell wall biogenesis; peptidoglycan biosynthesis. In terms of biological role, provides the (R)-glutamate required for cell wall biosynthesis. This chain is Glutamate racemase, found in Lysinibacillus sphaericus (Bacillus sphaericus).